Here is a 244-residue protein sequence, read N- to C-terminus: Probable cytokinin riboside 5'-monophosphate phosphoribohydrolase LOGL2 (244 aa).

Substrate contacts are provided by residues glutamate 91, 109-110, and 126-132; these read RK and GYGTLEE.

This sequence belongs to the LOG family.

The catalysed reaction is N(6)-(dimethylallyl)adenosine 5'-phosphate + H2O = N(6)-dimethylallyladenine + D-ribose 5-phosphate. It carries out the reaction 9-ribosyl-trans-zeatin 5'-phosphate + H2O = trans-zeatin + D-ribose 5-phosphate. In terms of biological role, cytokinin-activating enzyme working in the direct activation pathway. Phosphoribohydrolase that converts inactive cytokinin nucleotides to the biologically active free-base forms. This Oryza sativa subsp. japonica (Rice) protein is Probable cytokinin riboside 5'-monophosphate phosphoribohydrolase LOGL2 (LOGL2).